A 689-amino-acid polypeptide reads, in one-letter code: Glycine--tRNA ligase beta subunit (689 aa).

This sequence belongs to the class-II aminoacyl-tRNA synthetase family. Tetramer of two alpha and two beta subunits.

Its subcellular location is the cytoplasm. The catalysed reaction is tRNA(Gly) + glycine + ATP = glycyl-tRNA(Gly) + AMP + diphosphate. The protein is Glycine--tRNA ligase beta subunit of Shewanella halifaxensis (strain HAW-EB4).